Reading from the N-terminus, the 613-residue chain is Alkyldihydroxyacetonephosphate synthase (613 aa).

The FAD-binding PCMH-type domain maps to isoleucine 126 to leucine 307. FAD-binding positions include proline 158 to asparagine 164, aspartate 228 to threonine 234, alanine 241 to serine 244, and glutamate 291 to valine 297. Arginine 437 is a substrate binding site. The Proton donor/acceptor role is filled by tyrosine 498. The interval histidine 534–histidine 536 is important for enzyme activity. Positions asparagine 572 to arginine 593 are disordered. Positions alanine 611–leucine 613 match the Microbody targeting signal motif.

It belongs to the FAD-binding oxidoreductase/transferase type 4 family. Homodimer. The cofactor is FAD.

It localises to the peroxisome. It catalyses the reaction a long chain fatty alcohol + a 1-acylglycerone 3-phosphate = a 1-O-alkylglycerone 3-phosphate + a long-chain fatty acid + H(+). Its pathway is glycerolipid metabolism; ether lipid biosynthesis. Its function is as follows. Catalyzes the exchange of an acyl for a long-chain alkyl group and the formation of the ether bond in the biosynthesis of ether phospholipids. The sequence is that of Alkyldihydroxyacetonephosphate synthase from Trypanosoma brucei brucei.